A 328-amino-acid polypeptide reads, in one-letter code: MMWRPSVLLLLLLLRHGAQGKPSPDAGPHGQGRVHQAAPLSDAPHDDAHGNFQYDHEAFLGREVAKEFDQLTPEESQARLGRIVDRMDRAGDGDGWVSLAELRAWIAHTQQRHIRDSVSAAWDTYDTDRDGRVGWEELRNATYGHYAPGEEFHDVEDAETYKKMLARDERRFRVADQDGDSMATREELTAFLHPEEFPHMRDIVIAETLEDLDRNKDGYVQVEEYIADLYSAEPGEEEPAWVQTERQQFRDFRDLNKDGHLDGSEVGHWVLPPAQDQPLVEANHLLHESDTDKDGRLSKAEILGNWNMFVGSQATNYGEDLTRHHDEL.

The N-terminal stretch at M1 to G20 is a signal peptide. The tract at residues Q19–H49 is disordered. EF-hand domains follow at residues E75–R112, H113–P148, K163–P198, M200–G235, W241–D276, and Q277–S312. Residues D92, D94, W96, E101, D126, D128, D130, R132, and E137 each coordinate Ca(2+). Residue N140 is glycosylated (N-linked (GlcNAc...) asparagine). Ca(2+) is bound by residues D176, D178, D180, M182, E187, D213, N215, D217, Y219, E224, D254, N256, D258, H260, E265, D290, D292, D294, R296, and E301. Positions H325 to L328 match the Prevents secretion from ER motif.

The protein belongs to the CREC family. In terms of assembly, interacts with PCSK6 (immature form including the propeptide); probably involved in the maturation and the secretion of PCSK6. Post-translationally, degraded by PCSK6 and other endoproteases including FURIN and PCSK5. In terms of processing, N-glycosylated. As to expression, widely expressed.

It is found in the endoplasmic reticulum lumen. Probable molecular chaperone assisting protein biosynthesis and transport in the endoplasmic reticulum. Required for the proper biosynthesis and transport of pulmonary surfactant-associated protein A/SP-A, pulmonary surfactant-associated protein D/SP-D and the lipid transporter ABCA3. By regulating both the proper expression and the degradation through the endoplasmic reticulum-associated protein degradation pathway of these proteins plays a crucial role in pulmonary surfactant homeostasis. Has an anti-fibrotic activity by negatively regulating the secretion of type I and type III collagens. This calcium-binding protein also transiently associates with immature PCSK6 and regulates its secretion. In Homo sapiens (Human), this protein is Reticulocalbin-3.